A 268-amino-acid polypeptide reads, in one-letter code: 5'-nucleotidase SurE (268 aa).

A divalent metal cation-binding residues include Asp-24, Asp-25, Ser-55, and Asn-111.

Belongs to the SurE nucleotidase family. A divalent metal cation is required as a cofactor.

The protein resides in the cytoplasm. The enzyme catalyses a ribonucleoside 5'-phosphate + H2O = a ribonucleoside + phosphate. Functionally, nucleotidase that shows phosphatase activity on nucleoside 5'-monophosphates. This chain is 5'-nucleotidase SurE, found in Deinococcus radiodurans (strain ATCC 13939 / DSM 20539 / JCM 16871 / CCUG 27074 / LMG 4051 / NBRC 15346 / NCIMB 9279 / VKM B-1422 / R1).